Consider the following 255-residue polypeptide: Cytochrome b561 and DOMON domain-containing protein At5g48750 (255 aa).

The first 27 residues, 1-27 (MFLSSRTIFVGLCFLFVLAPCFTRATT), serve as a signal peptide directing secretion. Positions 54–169 (LDSFLHYSYV…TVVNHLWQDG (116 aa)) constitute a DOMON domain. Residues 176-255 (RLGMHAMSGN…DPTWFYILIL (80 aa)) enclose the Cytochrome b561 domain. The chain crosses the membrane as a helical span at residues 216–236 (IHGLVNAVCWGIFIPIGVMAA).

The protein resides in the membrane. The protein is Cytochrome b561 and DOMON domain-containing protein At5g48750 of Arabidopsis thaliana (Mouse-ear cress).